Here is a 104-residue protein sequence, read N- to C-terminus: Large ribosomal subunit protein bL21 (104 aa).

Belongs to the bacterial ribosomal protein bL21 family. Part of the 50S ribosomal subunit. Contacts protein L20.

Its function is as follows. This protein binds to 23S rRNA in the presence of protein L20. This is Large ribosomal subunit protein bL21 from Gluconacetobacter diazotrophicus (strain ATCC 49037 / DSM 5601 / CCUG 37298 / CIP 103539 / LMG 7603 / PAl5).